The chain runs to 72 residues: Translation initiation factor IF-1 (72 aa).

The region spanning 1–72 (MAKEDNIEMQ…TKGRIVFRAR (72 aa)) is the S1-like domain.

This sequence belongs to the IF-1 family. In terms of assembly, component of the 30S ribosomal translation pre-initiation complex which assembles on the 30S ribosome in the order IF-2 and IF-3, IF-1 and N-formylmethionyl-tRNA(fMet); mRNA recruitment can occur at any time during PIC assembly.

It is found in the cytoplasm. Functionally, one of the essential components for the initiation of protein synthesis. Stabilizes the binding of IF-2 and IF-3 on the 30S subunit to which N-formylmethionyl-tRNA(fMet) subsequently binds. Helps modulate mRNA selection, yielding the 30S pre-initiation complex (PIC). Upon addition of the 50S ribosomal subunit IF-1, IF-2 and IF-3 are released leaving the mature 70S translation initiation complex. The protein is Translation initiation factor IF-1 of Shewanella baltica (strain OS155 / ATCC BAA-1091).